We begin with the raw amino-acid sequence, 68 residues long: Large ribosomal subunit protein bL35 (68 aa).

It belongs to the bacterial ribosomal protein bL35 family.

This chain is Large ribosomal subunit protein bL35, found in Rickettsia bellii (strain RML369-C).